A 448-amino-acid polypeptide reads, in one-letter code: Maltoporin (448 aa).

Residues 1-25 (MMITLRKLPLAVAVMAGIFAAQASA) form the signal peptide.

Belongs to the porin LamB (TC 1.B.3) family. Homotrimer formed of three 18-stranded antiparallel beta-barrels, containing three independent channels.

The protein resides in the cell outer membrane. The catalysed reaction is beta-maltose(in) = beta-maltose(out). Its function is as follows. Involved in the transport of maltose and maltodextrins. The sequence is that of Maltoporin from Cronobacter sakazakii (strain ATCC BAA-894) (Enterobacter sakazakii).